Reading from the N-terminus, the 240-residue chain is Large ribosomal subunit protein uL1 (240 aa).

Belongs to the universal ribosomal protein uL1 family. In terms of assembly, part of the 50S ribosomal subunit.

Its function is as follows. Binds directly to 23S rRNA. The L1 stalk is quite mobile in the ribosome, and is involved in E site tRNA release. Protein L1 is also a translational repressor protein, it controls the translation of the L11 operon by binding to its mRNA. In Streptomyces griseus subsp. griseus (strain JCM 4626 / CBS 651.72 / NBRC 13350 / KCC S-0626 / ISP 5235), this protein is Large ribosomal subunit protein uL1.